The chain runs to 212 residues: Large ribosomal subunit protein uL3 (212 aa).

Positions 136–155 (THGNSVSHRVLGSTGQNQTP) are disordered. At glutamine 153 the chain carries N5-methylglutamine.

Belongs to the universal ribosomal protein uL3 family. Part of the 50S ribosomal subunit. Forms a cluster with proteins L14 and L19. In terms of processing, methylated by PrmB.

One of the primary rRNA binding proteins, it binds directly near the 3'-end of the 23S rRNA, where it nucleates assembly of the 50S subunit. This Acinetobacter baumannii (strain AB307-0294) protein is Large ribosomal subunit protein uL3.